The sequence spans 245 residues: Deoxyadenosine kinase (245 aa).

28 to 36 (GLIGAGKTT) serves as a coordination point for ATP. Substrate contacts are provided by Glu52, Tyr64, and Gln75. Catalysis depends on Asp99, which acts as the Proton acceptor. The substrate site is built by Arg100, Asp105, and Glu165.

This sequence belongs to the DCK/DGK family.

The catalysed reaction is 2'-deoxyadenosine + ATP = dAMP + ADP + H(+). Its function is as follows. Specific kinase that phosphorylates deoxyadenosine but not any other deoxyribonucleoside, as part of the deoxyribonucleotide salvage pathway. The sequence is that of Deoxyadenosine kinase (dak) from Dictyostelium discoideum (Social amoeba).